The sequence spans 20 residues: Expansin-B (20 aa).

Residues 1–20 (GPPKVAPGKXISASFGGEWL) are disordered.

It belongs to the expansin family. Expansin B subfamily.

It localises to the secreted. It is found in the cell wall. The protein localises to the membrane. In terms of biological role, may aid fertilization by loosening the cell wall of the stigma and style, thereby facilitating penetration of the pollen tube. Acts selectively on grass cell walls, which are relatively poor in pectins and xyloglucans and rich in glucuronoarabinoxylans and (1-3),(1-4)-beta-D-glucans, when compared with cell walls of other angiosperms, including other monocots. The polypeptide is Expansin-B (Paspalum notatum (Bahia grass)).